Consider the following 196-residue polypeptide: UMP-CMP kinase (196 aa).

13 to 18 (GAGKGT) lines the ATP pocket. Serine 33 carries the phosphoserine modification. Residues 33–63 (SAGELLRDERKNPDSQYGELIEKYIKEGKIV) form an NMP region. A ribonucleoside 5'-phosphate is bound at residue arginine 39. N6-acetyllysine occurs at positions 43 and 55. 61–63 (KIV) provides a ligand contact to a ribonucleoside 5'-phosphate. Residue lysine 73 forms a Glycyl lysine isopeptide (Lys-Gly) (interchain with G-Cter in SUMO2) linkage. 93–96 (GFPR) provides a ligand contact to a ribonucleoside 5'-phosphate. Asparagine 100 serves as a coordination point for CMP. Lysine 106 carries the N6-succinyllysine modification. The interval 133–143 (ERGKSSGRSDD) is LID. Arginine 134 is a binding site for ATP. Arginine 140 and arginine 151 together coordinate a ribonucleoside 5'-phosphate. Residue lysine 179 coordinates ATP. Serine 180 is modified (phosphoserine).

Belongs to the adenylate kinase family. UMP-CMP kinase subfamily. In terms of assembly, monomer. Mg(2+) serves as cofactor.

The protein resides in the nucleus. Its subcellular location is the cytoplasm. It catalyses the reaction CMP + ATP = CDP + ADP. The catalysed reaction is dCMP + ATP = dCDP + ADP. It carries out the reaction UMP + ATP = UDP + ADP. The enzyme catalyses a 2'-deoxyribonucleoside 5'-diphosphate + ATP = a 2'-deoxyribonucleoside 5'-triphosphate + ADP. It catalyses the reaction a ribonucleoside 5'-diphosphate + ATP = a ribonucleoside 5'-triphosphate + ADP. Catalyzes the phosphorylation of pyrimidine nucleoside monophosphates at the expense of ATP. Plays an important role in de novo pyrimidine nucleotide biosynthesis. Has preference for UMP and CMP as phosphate acceptors. Also displays broad nucleoside diphosphate kinase activity. This is UMP-CMP kinase (Cmpk1) from Mus musculus (Mouse).